The sequence spans 644 residues: MNARVEQLEFQAEARQLLDLMVHSVYSNKDSFLRELISNASDALDKLRLEAFRNKDLDVDTSDLHIQIEVDKDARTLTIRDNGIGMTRAEVVDLIGTLAKSGTAELRQQLREAKNAQNEAASEELIGQFGIGFYSSFMVADKVELLTRKAGESEATKWESSGEGTYTIESVENAPQGTSVTLHLKPEDTEDELHDYTSEFKIKSLVKKYSDFIAWPIRMEVERRTPATEEGGEETVTREVETLNSMKALWARPKDEVSEEEYKEFYKHIAHAWDDPLEVIAMKAEGTFEYQALLFIPSHAPFDLFNRDAHTGIQLYVKRVFIMGDCDQLMPEYLRFVKGVVDAQDMSLNVSREILQQDRQIKAIRRRLTKKVLSTIKELQSERPDDYRTFWTQFGRVVKEGLLSDFDNQETLLQLCSFASTHSEEEATTLAQYVERMKEGQTQIFYATGETRQQILKSPHLEAFKAKGYEVLLLTDPVDEVWVGTVTEFDGKPLQSIAKGEVDLSAEGEESQAEREEQQKEFADLLAWLKDTLSDHVKEVRLSNRLTDSPACLITDAFGITPALARLYRASGQDIPVGKRILELNPKHPLVTGLRQAHQDRADDPSVAETAELLYGTALLAEGGALDDPARFAEILADRLARTL.

The interval 1-352 (MNARVEQLEF…AQDMSLNVSR (352 aa)) is a; substrate-binding. A b region spans residues 353–566 (EILQQDRQIK…AFGITPALAR (214 aa)). Residues 567–644 (LYRASGQDIP…ILADRLARTL (78 aa)) form a c region.

This sequence belongs to the heat shock protein 90 family. As to quaternary structure, homodimer.

It localises to the cytoplasm. Its function is as follows. Molecular chaperone. Has ATPase activity. The sequence is that of Chaperone protein HtpG from Mycobacterium avium (strain 104).